Consider the following 131-residue polypeptide: Small ribosomal subunit protein uS8 (131 aa).

The protein belongs to the universal ribosomal protein uS8 family. Part of the 30S ribosomal subunit. Contacts proteins S5 and S12.

One of the primary rRNA binding proteins, it binds directly to 16S rRNA central domain where it helps coordinate assembly of the platform of the 30S subunit. The protein is Small ribosomal subunit protein uS8 of Campylobacter jejuni subsp. jejuni serotype O:23/36 (strain 81-176).